We begin with the raw amino-acid sequence, 143 residues long: Large ribosomal subunit protein uL11 (143 aa).

It belongs to the universal ribosomal protein uL11 family. In terms of assembly, part of the ribosomal stalk of the 50S ribosomal subunit. Interacts with L10 and the large rRNA to form the base of the stalk. L10 forms an elongated spine to which L12 dimers bind in a sequential fashion forming a multimeric L10(L12)X complex. Post-translationally, one or more lysine residues are methylated.

Forms part of the ribosomal stalk which helps the ribosome interact with GTP-bound translation factors. The sequence is that of Large ribosomal subunit protein uL11 from Cellvibrio japonicus (strain Ueda107) (Pseudomonas fluorescens subsp. cellulosa).